The chain runs to 337 residues: tRNA N6-adenosine threonylcarbamoyltransferase (337 aa).

His111 and His115 together coordinate Fe cation. Residues 134–138, Asp167, Gly180, and Asn272 each bind substrate; that span reads LVSGG. Residue Asp300 participates in Fe cation binding.

Belongs to the KAE1 / TsaD family. Fe(2+) is required as a cofactor.

It is found in the cytoplasm. It catalyses the reaction L-threonylcarbamoyladenylate + adenosine(37) in tRNA = N(6)-L-threonylcarbamoyladenosine(37) in tRNA + AMP + H(+). In terms of biological role, required for the formation of a threonylcarbamoyl group on adenosine at position 37 (t(6)A37) in tRNAs that read codons beginning with adenine. Is involved in the transfer of the threonylcarbamoyl moiety of threonylcarbamoyl-AMP (TC-AMP) to the N6 group of A37, together with TsaE and TsaB. TsaD likely plays a direct catalytic role in this reaction. The protein is tRNA N6-adenosine threonylcarbamoyltransferase of Aeromonas salmonicida (strain A449).